We begin with the raw amino-acid sequence, 454 residues long: Glutamyl-tRNA reductase (454 aa).

Substrate contacts are provided by residues 49 to 52, Ser-109, 114 to 116, and Gln-120; these read TCNR and ETQ. Residue Cys-50 is the Nucleophile of the active site. 189–194 lines the NADP(+) pocket; it reads GAGKMG.

The protein belongs to the glutamyl-tRNA reductase family. As to quaternary structure, homodimer.

It carries out the reaction (S)-4-amino-5-oxopentanoate + tRNA(Glu) + NADP(+) = L-glutamyl-tRNA(Glu) + NADPH + H(+). The protein operates within porphyrin-containing compound metabolism; protoporphyrin-IX biosynthesis; 5-aminolevulinate from L-glutamyl-tRNA(Glu): step 1/2. Its function is as follows. Catalyzes the NADPH-dependent reduction of glutamyl-tRNA(Glu) to glutamate 1-semialdehyde (GSA). This is Glutamyl-tRNA reductase from Geobacillus kaustophilus (strain HTA426).